A 131-amino-acid polypeptide reads, in one-letter code: NADH-quinone oxidoreductase subunit I 2 (131 aa).

4Fe-4S ferredoxin-type domains are found at residues 42 to 71 and 81 to 110; these read LKVS…VEAG and ERYE…MTGE. [4Fe-4S] cluster contacts are provided by C51, C54, C57, C61, C90, C93, C96, and C100.

It belongs to the complex I 23 kDa subunit family. NDH-1 is composed of 14 different subunits. Subunits NuoA, H, J, K, L, M, N constitute the membrane sector of the complex. Requires [4Fe-4S] cluster as cofactor.

It is found in the cell inner membrane. It carries out the reaction a quinone + NADH + 5 H(+)(in) = a quinol + NAD(+) + 4 H(+)(out). Its function is as follows. NDH-1 shuttles electrons from NADH, via FMN and iron-sulfur (Fe-S) centers, to quinones in the respiratory chain. The immediate electron acceptor for the enzyme in this species is believed to be ubiquinone. Couples the redox reaction to proton translocation (for every two electrons transferred, four hydrogen ions are translocated across the cytoplasmic membrane), and thus conserves the redox energy in a proton gradient. The protein is NADH-quinone oxidoreductase subunit I 2 of Geobacter metallireducens (strain ATCC 53774 / DSM 7210 / GS-15).